Consider the following 619-residue polypeptide: DNA mismatch repair protein MutL (619 aa).

The protein belongs to the DNA mismatch repair MutL/HexB family.

In terms of biological role, this protein is involved in the repair of mismatches in DNA. It is required for dam-dependent methyl-directed DNA mismatch repair. May act as a 'molecular matchmaker', a protein that promotes the formation of a stable complex between two or more DNA-binding proteins in an ATP-dependent manner without itself being part of a final effector complex. The protein is DNA mismatch repair protein MutL of Shewanella frigidimarina (strain NCIMB 400).